The chain runs to 175 residues: Hypoxanthine-guanine phosphoribosyltransferase (175 aa).

The diphosphate site is built by K40 and G41. Residues E96 and D97 each coordinate Mg(2+). The active-site Proton acceptor is D100. GMP is bound by residues K128, 149–150 (FL), and D156. Residue R162 participates in diphosphate binding.

The protein belongs to the purine/pyrimidine phosphoribosyltransferase family. Mg(2+) is required as a cofactor.

The protein resides in the cytoplasm. The catalysed reaction is IMP + diphosphate = hypoxanthine + 5-phospho-alpha-D-ribose 1-diphosphate. It catalyses the reaction GMP + diphosphate = guanine + 5-phospho-alpha-D-ribose 1-diphosphate. The protein operates within purine metabolism; IMP biosynthesis via salvage pathway; IMP from hypoxanthine: step 1/1. It participates in purine metabolism; GMP biosynthesis via salvage pathway; GMP from guanine: step 1/1. In terms of biological role, purine salvage pathway enzyme that catalyzes the transfer of the ribosyl-5-phosphate group from 5-phospho-alpha-D-ribose 1-diphosphate (PRPP) to the N9 position of the 6-oxopurines hypoxanthine and guanine to form the corresponding ribonucleotides IMP (inosine 5'-monophosphate) and GMP (guanosine 5'-monophosphate), with the release of PPi. The polypeptide is Hypoxanthine-guanine phosphoribosyltransferase (hpt) (Mycoplasma genitalium (strain ATCC 33530 / DSM 19775 / NCTC 10195 / G37) (Mycoplasmoides genitalium)).